A 415-amino-acid chain; its full sequence is L-cysteine:1D-myo-inositol 2-amino-2-deoxy-alpha-D-glucopyranoside ligase (415 aa).

Residue Cys-47 participates in Zn(2+) binding. L-cysteinyl-5'-AMP-binding positions include 47 to 50 (CGIT), Thr-62, and 85 to 87 (NVT). Residues 49–59 (ITPYDATHLGH) carry the 'HIGH' region motif. A 'ERGGDP' region motif is present at residues 190–195 (ERGGDP). Trp-230 serves as a coordination point for L-cysteinyl-5'-AMP. Residue Cys-234 coordinates Zn(2+). Position 252–254 (252–254 (GSD)) interacts with L-cysteinyl-5'-AMP. Residue His-259 coordinates Zn(2+). Ile-286 contacts L-cysteinyl-5'-AMP. A 'KMSKS' region motif is present at residues 292 to 296 (KMSKS).

This sequence belongs to the class-I aminoacyl-tRNA synthetase family. MshC subfamily. Monomer. It depends on Zn(2+) as a cofactor.

The enzyme catalyses 1D-myo-inositol 2-amino-2-deoxy-alpha-D-glucopyranoside + L-cysteine + ATP = 1D-myo-inositol 2-(L-cysteinylamino)-2-deoxy-alpha-D-glucopyranoside + AMP + diphosphate + H(+). Its function is as follows. Catalyzes the ATP-dependent condensation of GlcN-Ins and L-cysteine to form L-Cys-GlcN-Ins. The chain is L-cysteine:1D-myo-inositol 2-amino-2-deoxy-alpha-D-glucopyranoside ligase (mshC) from Mycolicibacterium paratuberculosis (strain ATCC BAA-968 / K-10) (Mycobacterium paratuberculosis).